Here is an 828-residue protein sequence, read N- to C-terminus: MGGSSGGGVSYRSGGESDVELEDYEVDDFRDGIVESRGNRFNPLTNFLGLDFAGGSGGKFTVINGIRDISRGSIVHPDNRWYKAWTMFILIWALYSSFFTPLEFGFFRGLPENLFILDIAGQIAFLVDIVLTFFVAYRDSRTYRMIYKRSSIALRYLKSTFIIDLLACMPWDIIYKAAGEKEEVRYLLLIRLYRVHRVILFFHKMEKDIRINYLFTRIVKLIFVELYCTHTAACIFYYLATTLPASQEGYTWIGSLKLGDYSYSKFREIDLWTRYTTSMYFAVVTMATVGYGDIHAVNMREMIFAMVYISFDMILGAYLIGNMTALIVKGSKTERFRDKMADIMRYMNRNKLGRNIRGQITGHLRLQYESSYTEAAVLQDIPVSIRAKIAQTLYLPYIEKVPLFRGCSSEFINQIVIRLHEEFFLPGEVIMEQGSVVDQLYFVCHGVLEEIGITKDGSEEIVAVLQPDHSFGEISILCNIPQPYTVRVAELCRILRLDKQSFMNILEIFFHDGRRILNNLLEGKESNVRIKQLESDITFHISKQEAELALKLNSAAFYGDLYQLKSLIRAGGDPNKTDYDGRSPLHLAASRGYEDITLYLIQESVDVNIKDKLGSTPLLEAIKNGNDRVAALLVKEGATLNIENAGTFLCTVVAKGDSDFLKRLLSNGIDPNSKDYDHRTPLHVAASEGFYVLAIQLVEASANVLAKDRWGNTPLDEALGCGNKMLIKLLEDAKNSQISSFPSGSKEPKDKVYKKKCTVYFSHPGDSKEKRRRGIVLWVPRSIEELIRTAKEQLNVPEASCVLSEDEAKIIDVDLISDGQKLYLAVET.

Residues 1–86 are Cytoplasmic-facing; that stretch reads MGGSSGGGVS…PDNRWYKAWT (86 aa). The helical transmembrane segment at 87–107 threads the bilayer; sequence MFILIWALYSSFFTPLEFGFF. At 108–114 the chain is on the extracellular side; the sequence is RGLPENL. Residues 115–135 traverse the membrane as a helical segment; that stretch reads FILDIAGQIAFLVDIVLTFFV. Residues 136–158 are Cytoplasmic-facing; sequence AYRDSRTYRMIYKRSSIALRYLK. The chain crosses the membrane as a helical span at residues 159-179; it reads STFIIDLLACMPWDIIYKAAG. At 180-185 the chain is on the extracellular side; the sequence is EKEEVR. The helical; Voltage-sensor transmembrane segment at 186–206 threads the bilayer; it reads YLLLIRLYRVHRVILFFHKME. At 207–220 the chain is on the cytoplasmic side; that stretch reads KDIRINYLFTRIVK. The helical transmembrane segment at 221-241 threads the bilayer; that stretch reads LIFVELYCTHTAACIFYYLAT. The Extracellular segment spans residues 242–276; sequence TLPASQEGYTWIGSLKLGDYSYSKFREIDLWTRYT. Residues 277–296 constitute an intramembrane region (pore-forming); sequence TSMYFAVVTMATVGYGDIHA. Over 297–300 the chain is Extracellular; sequence VNMR. The helical transmembrane segment at 301-321 threads the bilayer; sequence EMIFAMVYISFDMILGAYLIG. At 322 to 828 the chain is on the cytoplasmic side; it reads NMTALIVKGS…GQKLYLAVET (507 aa). 403–523 contacts a nucleoside 3',5'-cyclic phosphate; sequence LFRGCSSEFI…RRILNNLLEG (121 aa). ANK repeat units follow at residues 545-576, 580-609, 613-642, 644-673, 677-706, and 710-740; these read EAELALKLNSAAFYGDLYQLKSLIRAGGDPNK, DGRSPLHLAASRGYEDITLYLIQESVDVNI, LGSTPLLEAIKNGNDRVAALLVKEGATLNI, NAGTFLCTVVAKGDSDFLKRLLSNGIDPNS, DHRTPLHVAASEGFYVLAIQLVEASANVLA, and WGNTPLDEALGCGNKMLIKLLEDAKNSQISS. The region spanning 756–828 is the KHA domain; that stretch reads KCTVYFSHPG…GQKLYLAVET (73 aa).

The protein belongs to the potassium channel family. Plant (TC 1.A.1.4) subfamily. In terms of assembly, the potassium channel is probably composed of a homo- or heterotetrameric complex of pore-forming subunits. Expressed in root pericycle and xylem parenchyma, and in flower at a lower level.

Its subcellular location is the membrane. Functionally, highly selective outward-rectifying potassium channel. Involved in potassium release into the xylem sap toward the shoots. Assuming opened or closed conformations in response to the voltage difference across the membrane, the channel is activated by depolarization. The voltage-dependence of the channel is abolished by internal or external acidification. May interact with the cytoskeleton or with regulatory proteins. The polypeptide is Potassium channel SKOR (SKOR) (Arabidopsis thaliana (Mouse-ear cress)).